Reading from the N-terminus, the 355-residue chain is Probable nitronate monooxygenase (355 aa).

FMN contacts are provided by residues Asn-71, Gln-175, Gly-180, Gly-219, and Gln-238 to Thr-241.

The protein belongs to the nitronate monooxygenase family. NMO class I subfamily. The cofactor is FMN.

The enzyme catalyses 3 propionate 3-nitronate + 3 O2 + H2O = 3 3-oxopropanoate + 2 nitrate + nitrite + H2O2 + 3 H(+). Nitronate monooxygenase that uses molecular oxygen to catalyze the oxidative denitrification of alkyl nitronates. Acts on propionate 3-nitronate (P3N), the presumed physiological substrate. Probably functions in the detoxification of P3N, a metabolic poison produced by plants and fungi as a defense mechanism. This chain is Probable nitronate monooxygenase, found in Staphylococcus saprophyticus subsp. saprophyticus (strain ATCC 15305 / DSM 20229 / NCIMB 8711 / NCTC 7292 / S-41).